We begin with the raw amino-acid sequence, 1217 residues long: Myosin-1 (1217 aa).

The tract at residues 1 to 26 is disordered; that stretch reads MAILKRTNRAKAATAAAPNSTGKSNG. Low complexity predominate over residues 10-19; that stretch reads AKAATAAAPN. Residues 17–24 and 133–140 each bind ATP; these read APNSTGKS and GESGAGKT. Residues 40–720 enclose the Myosin motor domain; that stretch reads VGVDDLTLLS…TLFALEDMRD (681 aa). Residue Ser361 is modified to Phosphoserine. A Phosphotyrosine modification is found at Tyr363. Residues 409 to 491 are actin-binding; it reads SIGILDIYGF…PGLFAAMNDA (83 aa). IQ domains lie at 724–744 and 745–770; these read DTMATRIQRAWRSYVRRRSEA and AACIQKLWNRNKVNMELERVRNEGTK. The residue at position 742 (Ser742) is a Phosphoserine. In terms of domain architecture, TH1 spans 778 to 964; the sequence is RRRYSILGSR…TIHVGTGLPP (187 aa). Position 782 is a phosphoserine (Ser782). The disordered stretch occupies residues 961–1105; it reads GLPPTSKSKP…PPPPPPPAEV (145 aa). The segment covering 998–1013 has biased composition (low complexity); sequence KPVSMPAAKSKPAPMA. The span at 1015-1025 shows a compositional bias: polar residues; that stretch reads PVSTAQQTQNR. The segment covering 1045-1075 has biased composition (low complexity); that stretch reads TSTTTTIKQATTVSASKPAPSTVTSAASSPS. The segment covering 1076-1088 has biased composition (polar residues); it reads NISKPSAPVANNV. The segment covering 1093–1103 has biased composition (pro residues); it reads AVPPPPPPPPA. One can recognise an SH3 domain in the interval 1106–1165; sequence EKKDLYLALYDFAGRSPNEMTIKKDEIIEIVQKEPSGWWLALKNGAEGWVPATYVTEYKG. Ser1211 carries the phosphoserine modification.

Belongs to the TRAFAC class myosin-kinesin ATPase superfamily. Myosin family. Interacts with cam2. Interacts (via SH3 domain) with vrp1. In terms of processing, phosphorylation of the TEDS site (Ser-361) is required for the polarization of the actin cytoskeleton. Phosphorylation probably activates the myosin-I ATPase activity.

It is found in the cytoplasm. The protein resides in the cytoskeleton. Its subcellular location is the actin patch. Type-I myosin implicated in the organization of the actin cytoskeleton. Required for proper actin cytoskeleton polarization. At the cell cortex, assembles in patch-like structures together with proteins from the actin-polymerizing machinery and promotes actin assembly. Functions as actin nucleation-promoting factor (NPF) for the Arp2/3 complex. Contributes to proper septation by transporting vesicles containing septal material to the division site and is involved in the formation of sterol-rich membrane domains at the cell division site. Required also for mating. This Schizosaccharomyces pombe (strain 972 / ATCC 24843) (Fission yeast) protein is Myosin-1 (myo1).